The sequence spans 435 residues: Xylose isomerase (435 aa).

Residues His-100 and Asp-103 contribute to the active site. Glu-231, Glu-267, His-270, Asp-295, Asp-306, Asp-308, and Asp-338 together coordinate Mg(2+).

The protein belongs to the xylose isomerase family. In terms of assembly, homotetramer. Requires Mg(2+) as cofactor.

The protein resides in the cytoplasm. It carries out the reaction alpha-D-xylose = alpha-D-xylulofuranose. The chain is Xylose isomerase from Brucella ovis (strain ATCC 25840 / 63/290 / NCTC 10512).